The primary structure comprises 344 residues: Inositol 2-dehydrogenase/D-chiro-inositol 3-dehydrogenase (344 aa).

The protein belongs to the Gfo/Idh/MocA family. As to quaternary structure, homotetramer.

The enzyme catalyses myo-inositol + NAD(+) = scyllo-inosose + NADH + H(+). It carries out the reaction 1D-chiro-inositol + NAD(+) = scyllo-inosine + NADH + H(+). It participates in polyol metabolism; myo-inositol degradation into acetyl-CoA; acetyl-CoA from myo-inositol: step 1/7. In terms of biological role, involved in the oxidation of myo-inositol (MI) and D-chiro-inositol (DCI) to 2-keto-myo-inositol (2KMI or 2-inosose) and 1-keto-D-chiro-inositol (1KDCI), respectively. Can also use D-glucose and D-xylose, and shows a trace of activity with D-ribose and D-fructose. This Bacillus subtilis (strain 168) protein is Inositol 2-dehydrogenase/D-chiro-inositol 3-dehydrogenase (iolG).